A 508-amino-acid chain; its full sequence is Serine/threonine-protein kinase VRK2 (508 aa).

Residues 29 to 319 form the Protein kinase domain; it reads WVLGKKIGSG…KKILNPHGIP (291 aa). ATP-binding positions include 35-43 and K61; that span reads IGSGGFGLI. D166 acts as the Proton acceptor in catalysis. The residue at position 336 (T336) is a Phosphothreonine. The tract at residues 397-508 is interaction with MAP3K7; that stretch reads TRRRQKYQES…MLVFLALFFL (112 aa). The residue at position 406 (S406) is a Phosphoserine. The helical; Anchor for type IV membrane protein transmembrane segment at 487 to 507 threads the bilayer; sequence VYYYRIIIPVLLMLVFLALFF.

It belongs to the protein kinase superfamily. CK1 Ser/Thr protein kinase family. VRK subfamily. In terms of assembly, isoform 1 interacts with MAP3K7, MAP2K7, MAP2K1 and KSR1. Isoform 1 and isoform 2 interact with RAN and MAPK8IP1. (Microbial infection) Isoform 1 interacts with Epstein-Barr virus BHRF1; this interaction is involved in protecting cells from apoptosis. As to quaternary structure, (Microbial infection) Isoform 1 interacts with vaccinia protein B12. Post-translationally, autophosphorylated. In terms of tissue distribution, isoform 1 and isoform 2 are expressed in various tumor cell lines. Expression of isoform 1 inversely correlates with ERBB2 in breast carcinomas (at protein level). Widely expressed. Highly expressed in fetal liver, skeletal muscle, pancreas, heart, peripheral blood leukocytes and testis.

The protein resides in the cytoplasm. It localises to the endoplasmic reticulum membrane. It is found in the mitochondrion membrane. The protein localises to the nucleus envelope. Its subcellular location is the nucleus. The catalysed reaction is L-seryl-[protein] + ATP = O-phospho-L-seryl-[protein] + ADP + H(+). The enzyme catalyses L-threonyl-[protein] + ATP = O-phospho-L-threonyl-[protein] + ADP + H(+). Its activity is regulated as follows. RAN inhibits its autophosphorylation and its ability to phosphorylate histone H3. Its function is as follows. Serine/threonine kinase that regulates several signal transduction pathways. Isoform 1 modulates the stress response to hypoxia and cytokines, such as interleukin-1 beta (IL1B) and this is dependent on its interaction with MAPK8IP1, which assembles mitogen-activated protein kinase (MAPK) complexes. Inhibition of signal transmission mediated by the assembly of MAPK8IP1-MAPK complexes reduces JNK phosphorylation and JUN-dependent transcription. Phosphorylates 'Thr-18' of p53/TP53, histone H3, and may also phosphorylate MAPK8IP1. Phosphorylates BANF1 and disrupts its ability to bind DNA and reduces its binding to LEM domain-containing proteins. Down-regulates the transactivation of transcription induced by ERBB2, HRAS, BRAF, and MEK1. Blocks the phosphorylation of ERK in response to ERBB2 and HRAS. Can also phosphorylate the following substrates that are commonly used to establish in vitro kinase activity: casein, MBP and histone H2B, but it is not sure that this is physiologically relevant. Functionally, phosphorylates 'Thr-18' of p53/TP53, as well as histone H3. Reduces p53/TP53 ubiquitination by MDM2, promotes p53/TP53 acetylation by EP300 and thereby increases p53/TP53 stability and activity. The sequence is that of Serine/threonine-protein kinase VRK2 (VRK2) from Homo sapiens (Human).